The following is a 1238-amino-acid chain: DNA-directed RNA polymerase subunit beta (1238 aa).

Residues Ile-1186–Ile-1238 are disordered. A compositionally biased stretch (acidic residues) spans Pro-1193–Ile-1238.

The protein belongs to the RNA polymerase beta chain family. In terms of assembly, the RNAP catalytic core consists of 2 alpha, 1 beta, 1 beta' and 1 omega subunit. When a sigma factor is associated with the core the holoenzyme is formed, which can initiate transcription.

It catalyses the reaction RNA(n) + a ribonucleoside 5'-triphosphate = RNA(n+1) + diphosphate. Functionally, DNA-dependent RNA polymerase catalyzes the transcription of DNA into RNA using the four ribonucleoside triphosphates as substrates. The sequence is that of DNA-directed RNA polymerase subunit beta from Thermoanaerobacter sp. (strain X514).